Here is a 255-residue protein sequence, read N- to C-terminus: Acetylglutamate kinase (255 aa).

Residues 40-41 (GG), R62, and N157 contribute to the substrate site.

Belongs to the acetylglutamate kinase family. ArgB subfamily.

It is found in the cytoplasm. It catalyses the reaction N-acetyl-L-glutamate + ATP = N-acetyl-L-glutamyl 5-phosphate + ADP. Its pathway is amino-acid biosynthesis; L-arginine biosynthesis; N(2)-acetyl-L-ornithine from L-glutamate: step 2/4. In terms of biological role, catalyzes the ATP-dependent phosphorylation of N-acetyl-L-glutamate. This Parabacteroides distasonis (strain ATCC 8503 / DSM 20701 / CIP 104284 / JCM 5825 / NCTC 11152) protein is Acetylglutamate kinase.